The following is a 178-amino-acid chain: uncharacterized protein (178 aa).

4 helical membrane passes run alanine 29–phenylalanine 49, valine 76–leucine 96, proline 105–phenylalanine 125, and isoleucine 139–phenylalanine 159.

It is found in the cell membrane. This is an uncharacterized protein from Bacillus subtilis (strain 168).